The sequence spans 971 residues: Exportin-2 (971 aa).

Met-1 is modified (N-acetylmethionine). In terms of domain architecture, Importin N-terminal spans 29 to 102 (AEKFLESVEG…KANIVHLMLS (74 aa)). At Ser-112 the chain carries Phosphoserine. 2 positions are modified to N6-acetyllysine: Lys-574 and Lys-824. Residue Ser-931 is modified to Phosphoserine.

This sequence belongs to the XPO2/CSE1 family. In terms of assembly, found in a complex with CSE1L/XPO2, Ran and KPNA2. Binds with high affinity to importin-alpha only in the presence of RanGTP. The complex is dissociated by the combined action of RanBP1 and RanGAP1. Interacts with CFTR. Detected in brain, placenta, ovary, testis and trachea (at protein level). Widely expressed. Highly expressed in testis and in proliferating cells.

It is found in the cytoplasm. The protein resides in the nucleus. Export receptor for importin-alpha. Mediates importin-alpha re-export from the nucleus to the cytoplasm after import substrates (cargos) have been released into the nucleoplasm. In the nucleus binds cooperatively to importin-alpha and to the GTPase Ran in its active GTP-bound form. Docking of this trimeric complex to the nuclear pore complex (NPC) is mediated through binding to nucleoporins. Upon transit of a nuclear export complex into the cytoplasm, disassembling of the complex and hydrolysis of Ran-GTP to Ran-GDP (induced by RANBP1 and RANGAP1, respectively) cause release of the importin-alpha from the export receptor. CSE1L/XPO2 then return to the nuclear compartment and mediate another round of transport. The directionality of nuclear export is thought to be conferred by an asymmetric distribution of the GTP- and GDP-bound forms of Ran between the cytoplasm and nucleus. In Homo sapiens (Human), this protein is Exportin-2 (CSE1L).